Here is a 294-residue protein sequence, read N- to C-terminus: Nucleotide-binding protein Dde_1774 (294 aa).

An ATP-binding site is contributed by 14–21 (GLSGAGKS). GTP is bound at residue 66-69 (DLRQ).

Belongs to the RapZ-like family.

Displays ATPase and GTPase activities. This Oleidesulfovibrio alaskensis (strain ATCC BAA-1058 / DSM 17464 / G20) (Desulfovibrio alaskensis) protein is Nucleotide-binding protein Dde_1774.